Consider the following 535-residue polypeptide: Bifunctional purine biosynthesis protein PurH (535 aa).

Residues 6 to 151 form the MGS-like domain; the sequence is TRLPVRRALI…KNHKDVAIVV (146 aa).

The protein belongs to the PurH family.

The enzyme catalyses (6R)-10-formyltetrahydrofolate + 5-amino-1-(5-phospho-beta-D-ribosyl)imidazole-4-carboxamide = 5-formamido-1-(5-phospho-D-ribosyl)imidazole-4-carboxamide + (6S)-5,6,7,8-tetrahydrofolate. It carries out the reaction IMP + H2O = 5-formamido-1-(5-phospho-D-ribosyl)imidazole-4-carboxamide. Its pathway is purine metabolism; IMP biosynthesis via de novo pathway; 5-formamido-1-(5-phospho-D-ribosyl)imidazole-4-carboxamide from 5-amino-1-(5-phospho-D-ribosyl)imidazole-4-carboxamide (10-formyl THF route): step 1/1. It functions in the pathway purine metabolism; IMP biosynthesis via de novo pathway; IMP from 5-formamido-1-(5-phospho-D-ribosyl)imidazole-4-carboxamide: step 1/1. The protein is Bifunctional purine biosynthesis protein PurH of Pseudomonas putida (strain ATCC 700007 / DSM 6899 / JCM 31910 / BCRC 17059 / LMG 24140 / F1).